We begin with the raw amino-acid sequence, 23 residues long: Retinol-binding protein 3 (23 aa).

The protein localises to the secreted. Its subcellular location is the extracellular space. It is found in the extracellular matrix. The protein resides in the interphotoreceptor matrix. Its function is as follows. IRBP shuttles 11-cis and all trans retinoids between the retinol isomerase in the pigment epithelium and the visual pigments in the photoreceptor cells of the retina. This is Retinol-binding protein 3 (RBP3) from Oryctolagus cuniculus (Rabbit).